We begin with the raw amino-acid sequence, 121 residues long: Small ribosomal subunit protein uS13 (121 aa).

Residues 90 to 121 (RHRHGLPVRGQHTKNNARTRKGKAVAIAGKKK) form a disordered region.

This sequence belongs to the universal ribosomal protein uS13 family. As to quaternary structure, part of the 30S ribosomal subunit. Forms a loose heterodimer with protein S19. Forms two bridges to the 50S subunit in the 70S ribosome.

Its function is as follows. Located at the top of the head of the 30S subunit, it contacts several helices of the 16S rRNA. In the 70S ribosome it contacts the 23S rRNA (bridge B1a) and protein L5 of the 50S subunit (bridge B1b), connecting the 2 subunits; these bridges are implicated in subunit movement. Contacts the tRNAs in the A and P-sites. The sequence is that of Small ribosomal subunit protein uS13 from Limosilactobacillus fermentum (strain NBRC 3956 / LMG 18251) (Lactobacillus fermentum).